A 264-amino-acid polypeptide reads, in one-letter code: Hemin import ATP-binding protein HmuV (264 aa).

An ABC transporter domain is found at 2–241 (IEVSGVSVRL…ETMLSVFGLR (240 aa)). 34–41 (GPNGSGKT) serves as a coordination point for ATP.

This sequence belongs to the ABC transporter superfamily. Heme (hemin) importer (TC 3.A.1.14.5) family. As to quaternary structure, the complex is composed of two ATP-binding proteins (HmuV), two transmembrane proteins (HmuU) and a solute-binding protein (HmuT).

The protein localises to the cell inner membrane. Functionally, part of the ABC transporter complex HmuTUV involved in hemin import. Responsible for energy coupling to the transport system. The polypeptide is Hemin import ATP-binding protein HmuV (Rhizobium leguminosarum).